The chain runs to 514 residues: Ribonuclease Y (514 aa).

Residues 3 to 23 traverse the membrane as a helical segment; the sequence is YMIIYEIIAGILIVVAILIHF. In terms of domain architecture, KH spans 204–289; that stretch reads TVHVVTLPND…EMVEKAEKEL (86 aa). An HD domain is found at 330-423; sequence VLKHSVEVAY…VQAADAISAA (94 aa).

The protein belongs to the RNase Y family.

The protein resides in the cell membrane. Functionally, endoribonuclease that initiates mRNA decay. This chain is Ribonuclease Y, found in Clostridium kluyveri (strain ATCC 8527 / DSM 555 / NBRC 12016 / NCIMB 10680 / K1).